A 966-amino-acid chain; its full sequence is Probable LIM domain-containing serine/threonine-protein kinase DDB_G0286997 (966 aa).

LIM zinc-binding domains follow at residues 3–62 and 63–120; these read SRCG…LNAP and KCFK…KPPP. 2 disordered regions span residues 208-291 and 331-588; these read YSLS…PTED and PLNQ…EQQV. Over residues 211 to 231 the composition is skewed to low complexity; it reads SSPSSSSSSSSSSSSSSSSPP. Over residues 232-269 the composition is skewed to polar residues; sequence NTFNKSSDFLRNPLNNNVKSSSSSIGGNFVNKSQQQQQ. Composition is skewed to low complexity over residues 270 to 284 and 331 to 350; these read PIDS…ISPS and PLNQ…SPNL. A compositionally biased stretch (polar residues) spans 374 to 389; sequence TTTFSNPLLKTKNQSF. Residues 419-430 show a composition bias toward pro residues; that stretch reads PLPPPPITPIPS. Low complexity predominate over residues 431 to 449; it reads PSSSSIIINNQQQQQQESQ. Pro residues predominate over residues 490–511; it reads KPIVLPPPPLDMEQLPLPPPPL. Over residues 513-526 the composition is skewed to polar residues; sequence SSQINQSLKSTQHN. Low complexity predominate over residues 543–560; that stretch reads IQKQSIPTRKPQLPQSSN. Residues 561 to 570 show a composition bias toward pro residues; the sequence is PSPPSPPSPQ. The Protein kinase domain maps to 702 to 959; that stretch reads VIFGDVIAAG…DTLKKISESL (258 aa). Residues 708–716 and K729 each bind ATP; that span reads IAAGASGKV. The active-site Proton acceptor is the D825.

This sequence belongs to the protein kinase superfamily. TKL Ser/Thr protein kinase family.

It catalyses the reaction L-seryl-[protein] + ATP = O-phospho-L-seryl-[protein] + ADP + H(+). The catalysed reaction is L-threonyl-[protein] + ATP = O-phospho-L-threonyl-[protein] + ADP + H(+). In Dictyostelium discoideum (Social amoeba), this protein is Probable LIM domain-containing serine/threonine-protein kinase DDB_G0286997.